The chain runs to 55 residues: Bowman-Birk type proteinase inhibitor B1 (55 aa).

Cystine bridges form between Cys6–Cys53, Cys12–Cys17, Cys26–Cys33, and Cys30–Cys45.

Belongs to the Bowman-Birk serine protease inhibitor family. Expressed in bulb (at protein level).

Serine protease inhibitor. Weakly inhibits trypsin (Ki = 167 nM). Does not inhibit bacterial subtilisin or mamallian chymotrypsin. In Hyacinthus orientalis (Common hyacinth), this protein is Bowman-Birk type proteinase inhibitor B1.